Consider the following 571-residue polypeptide: MNGKVLPDTPIAVDCWQLRKCLHVRLFFLSHMHSDHTCGLSSTWSHRPIYCSPLTAKLLRLKLQIKQKWIRPLEIGQDHMLMLDDLGKERLTVNLIDANHCPGAVMFLFQGYFGTRLYTGDFRYTPSMLRVPCLQNHINIDVLYLDNTNCDPTRALPSRQQATQQIKQIIRDHPGYAVVIGLYSLGKESLLVDLAMEFKTWVEVDRERLETLRVLQLPDVFTTDSGAGRIRVVNQSMISASNLMAWNKLQSTIAILPTSRPMVSCHPNVYVVPYSDHSSYQELEDFVSALSPISLVPIVGNCLPYFSSLLSPRKKPKAVVIPESVKQYMMTNSNIRSSTNGMIQRTSRPEVRGVVFDSPETKLSQPNHDDMDSNDTEIDHDTTDRNSDSDCILLDMGTNSYHRDNDQGNKRLKLIRIESEDVVTVTSSLTMDDNESVSTRKGIGSPDPSLIYECDHESPTKSSKEKSPEMGSTNSGEMCSSMDSMHDQTSLTTAAALTLPNPQSVTSAIPITLESEQFEHWLLENFTIPAEELKEGQVLRGLCENYRLNPVDLPKPVGDPLEAAIKRLMSN.

Disordered stretches follow at residues 346-386 (TSRP…TDRN) and 431-487 (MDDN…SMHD). 2 stretches are compositionally biased toward basic and acidic residues: residues 367-386 (NHDDMDSNDTEIDHDTTDRN) and 453-468 (ECDHESPTKSSKEKSP). Polar residues predominate over residues 470–487 (MGSTNSGEMCSSMDSMHD). The TBM motif lies at 501 to 532 (NPQSVTSAIPITLESEQFEHWLLENFTIPAEE).

The protein belongs to the DNA repair metallo-beta-lactamase (DRMBL) family. As to quaternary structure, interacts with terf2; the interaction is direct.

It is found in the chromosome. The protein resides in the telomere. The protein localises to the nucleus. The enzyme catalyses a beta-lactam + H2O = a substituted beta-amino acid. In terms of biological role, 5'-3' exonuclease that plays a central role in telomere maintenance and protection during S-phase. Participates in the protection of telomeres against non-homologous end-joining (NHEJ)-mediated repair, thereby ensuring that telomeres do not fuse. Plays a key role in telomeric loop (T loop) formation by being recruited by terf2 at the leading end telomeres and by processing leading-end telomeres immediately after their replication via its exonuclease activity: generates 3' single-stranded overhang at the leading end telomeres avoiding blunt leading-end telomeres that are vulnerable to end-joining reactions and expose the telomere end in a manner that activates the DNA repair pathways. Possesses beta-lactamase activity, catalyzing the hydrolysis of penicillin G and nitrocefin. Exhibits no activity towards other beta-lactam antibiotic classes including cephalosporins (cefotaxime) and carbapenems (imipenem). The chain is 5' exonuclease Apollo (dclre1b) from Danio rerio (Zebrafish).